The chain runs to 428 residues: Zinc metalloproteinase nas-27 (428 aa).

The signal sequence occupies residues 1–17; that stretch reads MQILPIFFPLLITSLHA. A propeptide spanning residues 18–57 is cleaved from the precursor; sequence IPRGRRAVRNRNEGDINSLVGVGQYLYQGDIAVVKSRARR. The Peptidase M12A domain occupies 58-255; the sequence is AVIRQKHKKW…SRMNVLYNCH (198 aa). Cystine bridges form between cysteine 99–cysteine 254, cysteine 120–cysteine 141, cysteine 258–cysteine 276, cysteine 281–cysteine 290, cysteine 306–cysteine 339, and cysteine 366–cysteine 386. Histidine 150 lines the Zn(2+) pocket. Residue glutamate 151 is part of the active site. Residues histidine 154 and histidine 160 each contribute to the Zn(2+) site. A glycan (N-linked (GlcNAc...) asparagine) is linked at asparagine 181. One can recognise an EGF-like domain in the interval 250 to 291; that stretch reads VLYNCHERCANTLNRCQQGGYPAPSDCSQCVCPDGFGGNFCE. Positions 306-428 constitute a CUB domain; the sequence is CGGVLWASET…LDFNIEYRAV (123 aa). A glycan (N-linked (GlcNAc...) asparagine) is linked at asparagine 377.

The cofactor is Zn(2+).

It localises to the secreted. Its function is as follows. Metalloprotease. This is Zinc metalloproteinase nas-27 (nas-27) from Caenorhabditis elegans.